A 594-amino-acid polypeptide reads, in one-letter code: Sucrose transport protein SUC3 (594 aa).

Serine 2 carries the post-translational modification N-acetylserine. Topologically, residues 2–58 (SDSVSISVPYRNLRKEIELETVTKHRQNESGSSSFSESASPSNHSDSADGESVSKNC) are cytoplasmic. Residues 23-50 (VTKHRQNESGSSSFSESASPSNHSDSAD) form a disordered region. Residues 31–46 (SGSSSFSESASPSNHS) show a composition bias toward low complexity. Residues 59–79 (SLVTLVLSCTVAAGVQFGWAL) form a helical membrane-spanning segment. At 80-98 (QLSLLTPYIQTLGISHAFS) the chain is on the extracellular side. Residues 99–119 (SFIWLCGPITGLVVQPFVGIW) traverse the membrane as a helical segment. The Cytoplasmic segment spans residues 120 to 131 (SDKCTSKYGRRR). The helical transmembrane segment at 132-152 (PFILVGSFMISIAVIIIGFSA) threads the bilayer. Residues 153 to 174 (DIGYLLGDSKEHCSTFKGTRTR) are Extracellular-facing. A helical transmembrane segment spans residues 175–195 (AAVVFIIGFWLLDLANNTVQG). Topologically, residues 196-214 (PARALLADLSGPDQRNTAN) are cytoplasmic. The helical transmembrane segment at 215–235 (AVFCLWMAIGNILGFSAGASG) threads the bilayer. Residues 236–257 (KWQEWFPFLTSRACCAACGNLK) are Extracellular-facing. The helical transmembrane segment at 258-278 (AAFLLAVVFLTICTLVTIYFA) threads the bilayer. Residues 279 to 365 (KEIPFTSNKP…LTSLRHLPPA (87 aa)) are Cytoplasmic-facing. Residues 366 to 386 (MHSVLIVMALTWLSWFPFFLF) traverse the membrane as a helical segment. Residues 387–417 (DTDWMGREVYHGDPTGDSLHMELYDQGVREG) lie on the Extracellular side of the membrane. A helical transmembrane segment spans residues 418–438 (ALGLLLNSVVLGISSFLIEPM). Residues 439–445 (CQRMGAR) are Cytoplasmic-facing. The chain crosses the membrane as a helical span at residues 446-466 (VVWALSNFTVFACMAGTAVIS). The Extracellular segment spans residues 467 to 489 (LMSLSDDKNGIEYIMRGNETTRT). Asparagine 484 carries an N-linked (GlcNAc...) asparagine glycan. Residues 490–510 (AAVIVFALLGFPLAITYSVPF) form a helical membrane-spanning segment. The Cytoplasmic segment spans residues 511–525 (SVTAEVTADSGGGQG). The helical transmembrane segment at 526-546 (LAIGVLNLAIVIPQMIVSLGA) threads the bilayer. Over 547 to 555 (GPWDQLFGG) the chain is Extracellular. Residues 556–576 (GNLPAFVLASVAAFAAGVIAL) traverse the membrane as a helical segment. Over 577–594 (QRLPTLSSSFKSTGFHIG) the chain is Cytoplasmic.

This sequence belongs to the glycoside-pentoside-hexuronide (GPH) cation symporter transporter (TC 2.A.2.4) family. In terms of assembly, homodimer. Interacts with SUC2 and SUC4. In terms of tissue distribution, mostly localized in parenchymatic cells next to vascular tissues (at protein level). Present in stipules, trichomes, hydathodes and guard cells of source leaves, as well as in lateral root tips and flowers.

It is found in the cell membrane. The catalysed reaction is sucrose(out) + H(+)(out) = sucrose(in) + H(+)(in). It functions in the pathway glycan biosynthesis; sucrose metabolism. Its activity is regulated as follows. Inhibited by protonophores (e.g. dinitrophenol and carbonyl cyanide m-chlorophenyl-hydrazone (CCCP)) and SH group inhibitors (e.g. p-chloromercuribenzene sulphonic acid (PCMBS)). Responsible for the transport of sucrose into the cell, with the concomitant uptake of protons (symport system). Can also transport maltose at a lesser rate. May also transport biotin. Probably involved in carpel maturation that leads to pod shatter and seed dispersal. The polypeptide is Sucrose transport protein SUC3 (Arabidopsis thaliana (Mouse-ear cress)).